Reading from the N-terminus, the 485-residue chain is Carbohydrate sulfotransferase 7 (485 aa).

The Cytoplasmic portion of the chain corresponds to 1–12 (MKGRRRRRREYC). The chain crosses the membrane as a helical; Signal-anchor for type II membrane protein span at residues 13–33 (KFTLLLALYTLLLLLVPSVLD). Residues 34–485 (SGSEQDKGGR…PLETNANWAT (452 aa)) lie on the Lumenal side of the membrane. Residues 66 to 88 (EQGAEVRFQAEGNPDRSPRPQGN) are disordered. N-linked (GlcNAc...) asparagine glycosylation is present at asparagine 88. 109 to 115 (WRTGSSF) contacts 3'-phosphoadenylyl sulfate. Residue asparagine 185 is glycosylated (N-linked (GlcNAc...) asparagine). Position 277 to 285 (277 to 285 (RDPRAVHNS)) interacts with 3'-phosphoadenylyl sulfate. N-linked (GlcNAc...) asparagine glycosylation is present at asparagine 406. The residue at position 461 (serine 461) is a Phosphoserine. Positions 465–475 (RDVKTVRKGET) are enriched in basic and acidic residues. Residues 465 to 485 (RDVKTVRKGETPLETNANWAT) are disordered.

This sequence belongs to the sulfotransferase 1 family. Gal/GlcNAc/GalNAc subfamily.

The protein resides in the golgi apparatus membrane. It catalyses the reaction chondroitin beta-D-glucuronate + n 3'-phosphoadenylyl sulfate = chondroitin 6'-sulfate + n adenosine 3',5'-bisphosphate + n H(+). Functionally, sulfotransferase that utilizes 3'-phospho-5'-adenylyl sulfate (PAPS) as sulfonate donor to catalyze the transfer of sulfate to position 6 of non-reducing N-acetylglucosamine (GlcNAc) residues. Preferentially acts on mannose-linked GlcNAc. Also able to catalyze the transfer of sulfate to position 6 of the N-acetylgalactosamine (GalNAc) residue of chondroitin. Also acts on core 2 mucin-type oligosaccharide and N-acetyllactosamine oligomer with a lower efficiency. Has weak or no activity toward keratan sulfate and oligosaccharides containing the Galbeta1-4GlcNAc. Catalyzes 6-O-sulfation of beta-benzyl GlcNAc but not alpha- or beta-benzyl GalNAc. The chain is Carbohydrate sulfotransferase 7 (Chst7) from Rattus norvegicus (Rat).